We begin with the raw amino-acid sequence, 147 residues long: Large ribosomal subunit protein bL9 (147 aa).

This sequence belongs to the bacterial ribosomal protein bL9 family.

Functionally, binds to the 23S rRNA. This Mycoplasma capricolum subsp. capricolum (strain California kid / ATCC 27343 / NCTC 10154) protein is Large ribosomal subunit protein bL9.